The chain runs to 341 residues: GTPase Obg (341 aa).

The Obg domain maps to 1 to 159 (MKFVDEALIK…RNLRLELRVL (159 aa)). The interval 128–150 (TRYKSSVNRSPRQTTPGSPGESR) is disordered. Over residues 129 to 144 (RYKSSVNRSPRQTTPG) the composition is skewed to polar residues. The OBG-type G domain occupies 160–334 (ADVGLLGLPN…LCYALMQLID (175 aa)). GTP is bound by residues 166–173 (GLPNAGKS), 191–195 (FTTLH), 213–216 (DIPG), 283–286 (NKID), and 315–317 (SAI). Mg(2+) contacts are provided by S173 and T193.

This sequence belongs to the TRAFAC class OBG-HflX-like GTPase superfamily. OBG GTPase family. As to quaternary structure, monomer. Mg(2+) serves as cofactor.

It is found in the cytoplasm. An essential GTPase which binds GTP, GDP and possibly (p)ppGpp with moderate affinity, with high nucleotide exchange rates and a fairly low GTP hydrolysis rate. Plays a role in control of the cell cycle, stress response, ribosome biogenesis and in those bacteria that undergo differentiation, in morphogenesis control. This chain is GTPase Obg, found in Legionella pneumophila (strain Paris).